Here is a 396-residue protein sequence, read N- to C-terminus: ATP-dependent RNA helicase eIF4A (396 aa).

The tract at residues 1 to 20 is disordered; that stretch reads MADKGLEDVPEGQIESNYDE. The short motif at 23-51 is the Q motif element; the sequence is DSFDAMNLKAELLRGVYAYGFERPSAIQQ. A Helicase ATP-binding domain is found at 54 to 224; the sequence is IMPVIKGHDV…TKFMRDPVRI (171 aa). Residue 67–74 participates in ATP binding; it reads AQSGTGKT. Residues 172–175 carry the DEAD box motif; that stretch reads DEAD. A Helicase C-terminal domain is found at 235 to 396; that stretch reads GIKQFYIAVE…EMPMNVADLI (162 aa).

It belongs to the DEAD box helicase family. eIF4A subfamily. In terms of assembly, component of the eIF4F complex, which composition varies with external and internal environmental conditions. It is composed of at least eIF4A, eIF4E and eIF4G.

The protein localises to the cytoplasm. It catalyses the reaction ATP + H2O = ADP + phosphate + H(+). Its function is as follows. ATP-dependent RNA helicase which is a subunit of the eIF4F complex involved in cap recognition and is required for mRNA binding to ribosome. In the current model of translation initiation, eIF4A unwinds RNA secondary structures in the 5'-UTR of mRNAs which is necessary to allow efficient binding of the small ribosomal subunit, and subsequent scanning for the initiator codon. The protein is ATP-dependent RNA helicase eIF4A (TIF1) of Phaeosphaeria nodorum (strain SN15 / ATCC MYA-4574 / FGSC 10173) (Glume blotch fungus).